Reading from the N-terminus, the 119-residue chain is Small ribosomal subunit protein uS13 (119 aa).

The segment at 94 to 119 is disordered; the sequence is GLPVRGQRTQTNARTRKGPRRGPAGK.

The protein belongs to the universal ribosomal protein uS13 family. As to quaternary structure, part of the 30S ribosomal subunit. Forms a loose heterodimer with protein S19. Forms two bridges to the 50S subunit in the 70S ribosome.

In terms of biological role, located at the top of the head of the 30S subunit, it contacts several helices of the 16S rRNA. In the 70S ribosome it contacts the 23S rRNA (bridge B1a) and protein L5 of the 50S subunit (bridge B1b), connecting the 2 subunits; these bridges are implicated in subunit movement. Contacts the tRNAs in the A and P-sites. This Alkalilimnicola ehrlichii (strain ATCC BAA-1101 / DSM 17681 / MLHE-1) protein is Small ribosomal subunit protein uS13.